A 534-amino-acid chain; its full sequence is T-complex protein 1 subunit gamma (534 aa).

An N-acetylmethionine modification is found at M1. At S257 the chain carries Phosphoserine. C371 and C377 form a disulfide bridge.

Belongs to the TCP-1 chaperonin family. As to quaternary structure, heterooligomeric complex of about 850 to 900 kDa that forms two stacked rings, 12 to 16 nm in diameter.

The protein localises to the cytoplasm. Molecular chaperone; assists the folding of proteins upon ATP hydrolysis. Known to play a role, in vitro, in the folding of actin and tubulin. In yeast may play a role in mitotic spindle formation. The protein is T-complex protein 1 subunit gamma (CCT3) of Saccharomyces cerevisiae (strain ATCC 204508 / S288c) (Baker's yeast).